Here is a 542-residue protein sequence, read N- to C-terminus: Prolyl 4-hydroxylase subunit alpha-3 (542 aa).

The N-terminal stretch at 1–24 (MGPGARLALLALLALGGDPAAATG) is a signal peptide. A coiled-coil region spans residues 105–129 (LEATENIRALKDGYEKVEQDLPAFE). One copy of the TPR repeat lies at 225-258 (EDALDYLAFACFQVGNVSCALSLSREFLVYSPDN). Asn-240 is a glycosylation site (N-linked (GlcNAc...) asparagine). A Fe2OG dioxygenase domain is found at 420–527 (YAEYLQVVNY…KWVANKWIHE (108 aa)). Residues His-438 and Asp-440 each coordinate Fe cation. An N-linked (GlcNAc...) asparagine glycan is attached at Asn-480. Position 508 (His-508) interacts with Fe cation. Lys-518 lines the 2-oxoglutarate pocket.

The protein belongs to the P4HA family. In terms of assembly, heterotetramer of two alpha-3 chains and two beta chains (the beta chain is the multi-functional PDI). It depends on Fe(2+) as a cofactor. L-ascorbate is required as a cofactor. In terms of processing, N-glycosylation plays no role in the catalytic activity.

Its subcellular location is the endoplasmic reticulum lumen. The enzyme catalyses L-prolyl-[collagen] + 2-oxoglutarate + O2 = trans-4-hydroxy-L-prolyl-[collagen] + succinate + CO2. Its function is as follows. Catalyzes the post-translational formation of 4-hydroxyproline in -Xaa-Pro-Gly- sequences in collagens and other proteins. The polypeptide is Prolyl 4-hydroxylase subunit alpha-3 (P4ha3) (Mus musculus (Mouse)).